The chain runs to 459 residues: Siroheme synthase 2 (459 aa).

The tract at residues 1-204 (MDYLPIFCQL…EDRERVQQLT (204 aa)) is precorrin-2 dehydrogenase /sirohydrochlorin ferrochelatase. NAD(+)-binding positions include 22–23 (EI) and 43–44 (LD). Position 128 is a phosphoserine (S128). The segment at 216-459 (GEVTLVGAGP…KLSWFSDQTA (244 aa)) is uroporphyrinogen-III C-methyltransferase. Position 225 (P225) interacts with S-adenosyl-L-methionine. Catalysis depends on D248, which acts as the Proton acceptor. The Proton donor role is filled by K270. Residues 301–303 (GGD), I306, 331–332 (TA), M382, and G411 contribute to the S-adenosyl-L-methionine site.

It in the N-terminal section; belongs to the precorrin-2 dehydrogenase / sirohydrochlorin ferrochelatase family. In the C-terminal section; belongs to the precorrin methyltransferase family.

It carries out the reaction uroporphyrinogen III + 2 S-adenosyl-L-methionine = precorrin-2 + 2 S-adenosyl-L-homocysteine + H(+). The catalysed reaction is precorrin-2 + NAD(+) = sirohydrochlorin + NADH + 2 H(+). The enzyme catalyses siroheme + 2 H(+) = sirohydrochlorin + Fe(2+). Its pathway is cofactor biosynthesis; adenosylcobalamin biosynthesis; precorrin-2 from uroporphyrinogen III: step 1/1. It participates in cofactor biosynthesis; adenosylcobalamin biosynthesis; sirohydrochlorin from precorrin-2: step 1/1. The protein operates within porphyrin-containing compound metabolism; siroheme biosynthesis; precorrin-2 from uroporphyrinogen III: step 1/1. It functions in the pathway porphyrin-containing compound metabolism; siroheme biosynthesis; siroheme from sirohydrochlorin: step 1/1. Its pathway is porphyrin-containing compound metabolism; siroheme biosynthesis; sirohydrochlorin from precorrin-2: step 1/1. Functionally, multifunctional enzyme that catalyzes the SAM-dependent methylations of uroporphyrinogen III at position C-2 and C-7 to form precorrin-2 via precorrin-1. Then it catalyzes the NAD-dependent ring dehydrogenation of precorrin-2 to yield sirohydrochlorin. Finally, it catalyzes the ferrochelation of sirohydrochlorin to yield siroheme. In Pectobacterium atrosepticum (strain SCRI 1043 / ATCC BAA-672) (Erwinia carotovora subsp. atroseptica), this protein is Siroheme synthase 2.